A 633-amino-acid polypeptide reads, in one-letter code: Guanylate-binding protein 6 (633 aa).

Residues 1–310 are GTPase domain (Globular); that stretch reads MESGPKMLAP…EAINSGAVPC (310 aa). Positions 35-277 constitute a GB1/RHD3-type G domain; sequence SQPVVVVAIV…FCSYIFTHAR (243 aa). GTP is bound by residues 45 to 52, 67 to 69, and 97 to 101; these read GLYRTGKS, LGS, and DTEGL.

It belongs to the TRAFAC class dynamin-like GTPase superfamily. GB1/RHD3 GTPase family. GB1 subfamily. (Microbial infection) Ubiquitinated by S.flexneri IpaH9.8, leading to its degradation by the proteasome, thereby preventing its ability to promote host defense against bacterial infection.

The protein resides in the cytoplasmic vesicle. The catalysed reaction is GTP + H2O = GDP + phosphate + H(+). In terms of biological role, interferon (IFN)-inducible GTPase that plays important roles in innate immunity against a diverse range of bacterial, viral and protozoan pathogens, such as bacterial pathogens Listeria monocytogenes and Mycobacterium bovis BCG as well as the protozoan pathogen Toxoplasma gondii. Confers protection to several pathogens, including the bacterial pathogens Listeria monocytogenes and Mycobacterium bovis BCG as well as the protozoan pathogen Toxoplasma gondii. In Homo sapiens (Human), this protein is Guanylate-binding protein 6 (GBP6).